We begin with the raw amino-acid sequence, 299 residues long: Protein sprouty homolog 4 (299 aa).

Met1 is subject to N-acetylmethionine. 2 disordered regions span residues 50-79 and 92-127; these read NDYI…PTPA and FSGR…ASPR. A compositionally biased stretch (low complexity) spans 92–107; it reads FSGRPSSVSSSSSTSS. Ser125 carries the phosphoserine modification. The SPR domain occupies 166–273; the sequence is KCKECASPRT…GYDRLRRPGC (108 aa).

Belongs to the sprouty family. As to quaternary structure, interacts (via C-terminus) with TESK1 (via both C- and N-termini); the interaction inhibits TESK1 kinase activity. Interacts with RAF1. Interacts with CAV1 (via C-terminus).

Its subcellular location is the cytoplasm. It localises to the cell projection. It is found in the ruffle membrane. In terms of biological role, suppresses the insulin receptor and EGFR-transduced MAPK signaling pathway, but does not inhibit MAPK activation by a constitutively active mutant Ras. Probably impairs the formation of GTP-Ras. Inhibits Ras-independent, but not Ras-dependent, activation of RAF1. Represses integrin-mediated cell spreading via inhibition of TESK1-mediated phosphorylation of cofilin. The sequence is that of Protein sprouty homolog 4 (SPRY4) from Bos taurus (Bovine).